We begin with the raw amino-acid sequence, 242 residues long: Murein peptide amidase A (242 aa).

Residues 1 to 234 form the Peptidase M14 domain; the sequence is MTVTRPRAER…FAMANLLRWH (234 aa). Positions 49, 52, and 157 each coordinate Zn(2+). The Proton donor/acceptor role is filled by Glu210.

The protein belongs to the peptidase M14 family. In terms of assembly, homodimer. Requires Zn(2+) as cofactor.

The protein resides in the cytoplasm. The enzyme catalyses L-alanyl-gamma-D-glutamyl-meso-2,6-diaminopimelate + H2O = L-alanyl-D-glutamate + meso-2,6-diaminopimelate. The protein operates within cell wall degradation; peptidoglycan degradation. Functionally, involved in muropeptide degradation. Catalyzes the hydrolysis of the gamma-D-glutamyl-diaminopimelic acid (gamma-D-Glu-Dap) amide bond in the murein tripeptide L-alanyl-gamma-D-glutamyl-meso-diaminopimelic acid, leading to the formation of L-Ala-gamma-D-Glu and Dap. This chain is Murein peptide amidase A, found in Escherichia coli O157:H7.